A 654-amino-acid polypeptide reads, in one-letter code: Pentatricopeptide repeat-containing protein At3g16610 (654 aa).

PPR repeat units lie at residues 1–32, 34–64, 67–101, 102–136, 137–171, 172–203, 204–238, 239–269, 270–304, 307–341, 342–372, 373–407, 408–442, 443–473, 474–508, 509–543, and 546–576; these read MFLS…SLTL, SSTV…IPHP, NPIA…GVRP, TKYT…DFAT, DMYV…DMVA, WNAM…GLSP, NLST…GFSN, DLVV…DFKK, NEVT…DNVA, TPVA…GFIL, DLTV…IGLK, DVIS…GIRP, DITT…GYAV, NTSI…MHKR, DIVS…GVNP, DEVT…DFNV, and RIDH…MPFE. A type E motif; degenerate region spans residues 581–654; the sequence is VLGTLLSACW…KTPGYSWVDV (74 aa).

It belongs to the PPR family. PCMP-E subfamily.

The sequence is that of Pentatricopeptide repeat-containing protein At3g16610 (PCMP-E91) from Arabidopsis thaliana (Mouse-ear cress).